The chain runs to 102 residues: Cytochrome c (102 aa).

The residue at position 1 (G1) is an N-acetylglycine. The segment covering 1–11 (GDAERGKKLFE) has biased composition (basic and acidic residues). The tract at residues 1–26 (GDAERGKKLFESRAGQCHSSQKGVNS) is disordered. Heme c contacts are provided by C17, H18, and M79. A compositionally biased stretch (polar residues) spans 17 to 26 (CHSSQKGVNS). K85 carries the post-translational modification N6,N6,N6-trimethyllysine.

The protein belongs to the cytochrome c family. Binds 1 heme c group covalently per subunit.

Its subcellular location is the mitochondrion intermembrane space. In terms of biological role, electron carrier protein. The oxidized form of the cytochrome c heme group can accept an electron from the heme group of the cytochrome c1 subunit of cytochrome reductase. Cytochrome c then transfers this electron to the cytochrome oxidase complex, the final protein carrier in the mitochondrial electron-transport chain. This chain is Cytochrome c, found in Euglena viridis (Cercaria viridis).